Consider the following 141-residue polypeptide: MAMTFHVDIVSAEESIYSGTAQMVVAPAEGGEVGILPRHSQYIAQLKPGEVRVKVSDSGEEHSIFISGGLLEVQPHVVTVLADTAVRAKDLDEAEAKEAMRRAEEALSDRKADFDYAKAQAELIEAAARLRMIEKLRRHTR.

Belongs to the ATPase epsilon chain family. In terms of assembly, F-type ATPases have 2 components, CF(1) - the catalytic core - and CF(0) - the membrane proton channel. CF(1) has five subunits: alpha(3), beta(3), gamma(1), delta(1), epsilon(1). CF(0) has three main subunits: a, b and c.

Its subcellular location is the cell inner membrane. In terms of biological role, produces ATP from ADP in the presence of a proton gradient across the membrane. The protein is ATP synthase epsilon chain of Thioalkalivibrio sulfidiphilus (strain HL-EbGR7).